The sequence spans 602 residues: Auxin response factor 18 (602 aa).

A DNA-binding region (TF-B3) is located at residues F128–A230. Residues T359–P396 are disordered. Residues S360–S371 are compositionally biased toward polar residues. Residues R489–K581 form the PB1 domain.

This sequence belongs to the ARF family. Homodimers and heterodimers.

The protein resides in the nucleus. Auxin response factors (ARFs) are transcriptional factors that bind specifically to the DNA sequence 5'-TGTCTC-3' found in the auxin-responsive promoter elements (AuxREs). Could act as transcriptional activator or repressor. Formation of heterodimers with Aux/IAA proteins may alter their ability to modulate early auxin response genes expression. The protein is Auxin response factor 18 (ARF18) of Arabidopsis thaliana (Mouse-ear cress).